The sequence spans 453 residues: tRNA modification GTPase MnmE (453 aa).

3 residues coordinate (6S)-5-formyl-5,6,7,8-tetrahydrofolate: R22, E79, and K119. In terms of domain architecture, TrmE-type G spans 215 to 376 (GMKVVIAGRP…LKQHLKSLMG (162 aa)). N225 serves as a coordination point for K(+). Residues 225–230 (NAGKSS), 244–250 (TEIAGTT), 269–272 (DTAG), and 334–337 (NKAD) contribute to the GTP site. S229 is a binding site for Mg(2+). The K(+) site is built by T244, I246, and T249. Mg(2+) is bound at residue T250. K453 is a (6S)-5-formyl-5,6,7,8-tetrahydrofolate binding site.

Belongs to the TRAFAC class TrmE-Era-EngA-EngB-Septin-like GTPase superfamily. TrmE GTPase family. Homodimer. Heterotetramer of two MnmE and two MnmG subunits. The cofactor is K(+).

The protein localises to the cytoplasm. Exhibits a very high intrinsic GTPase hydrolysis rate. Involved in the addition of a carboxymethylaminomethyl (cmnm) group at the wobble position (U34) of certain tRNAs, forming tRNA-cmnm(5)s(2)U34. The chain is tRNA modification GTPase MnmE from Shewanella pealeana (strain ATCC 700345 / ANG-SQ1).